Reading from the N-terminus, the 196-residue chain is ATP-dependent Clp protease proteolytic subunit (196 aa).

The active-site Nucleophile is the Ser-96. The active site involves His-121.

This sequence belongs to the peptidase S14 family. In terms of assembly, fourteen ClpP subunits assemble into 2 heptameric rings which stack back to back to give a disk-like structure with a central cavity, resembling the structure of eukaryotic proteasomes.

It localises to the cytoplasm. The enzyme catalyses Hydrolysis of proteins to small peptides in the presence of ATP and magnesium. alpha-casein is the usual test substrate. In the absence of ATP, only oligopeptides shorter than five residues are hydrolyzed (such as succinyl-Leu-Tyr-|-NHMec, and Leu-Tyr-Leu-|-Tyr-Trp, in which cleavage of the -Tyr-|-Leu- and -Tyr-|-Trp bonds also occurs).. Functionally, cleaves peptides in various proteins in a process that requires ATP hydrolysis. Has a chymotrypsin-like activity. Plays a major role in the degradation of misfolded proteins. The sequence is that of ATP-dependent Clp protease proteolytic subunit from Streptococcus pneumoniae (strain P1031).